Consider the following 396-residue polypeptide: Aldo-keto reductase ausK (396 aa).

D76 provides a ligand contact to NADP(+). Y81 (proton donor) is an active-site residue. A substrate-binding site is contributed by H156. NADP(+)-binding positions include 186-187 (CN), Q212, 241-251 (DALGSGKFQSR), and 317-325 (RKIQHLHDN).

Belongs to the aldo/keto reductase family. Aldo/keto reductase 2 subfamily. As to quaternary structure, homodimer.

It functions in the pathway secondary metabolite biosynthesis; terpenoid biosynthesis. In terms of biological role, aldo-keto reductase; part of the gene cluster that mediates the biosynthesis of calidodehydroaustin, a fungal meroterpenoid. The first step of the pathway is the synthesis of 3,5-dimethylorsellinic acid by the polyketide synthase ausA. 3,5-dimethylorsellinic acid is then prenylated by the polyprenyl transferase ausN. Further epoxidation by the FAD-dependent monooxygenase ausM and cyclization by the probable terpene cyclase ausL lead to the formation of protoaustinoid A. Protoaustinoid A is then oxidized to spiro-lactone preaustinoid A3 by the combined action of the FAD-binding monooxygenases ausB and ausC, and the dioxygenase ausE. Acid-catalyzed keto-rearrangement and ring contraction of the tetraketide portion of preaustinoid A3 by ausJ lead to the formation of preaustinoid A4. The aldo-keto reductase ausK, with the help of ausH, is involved in the next step by transforming preaustinoid A4 into isoaustinone which is in turn hydroxylated by the P450 monooxygenase ausI to form austinolide. The cytochrome P450 monooxygenase ausG modifies austinolide to austinol. Austinol is further acetylated to austin by the O-acetyltransferase ausP, which spontaneously changes to dehydroaustin. The cytochrome P450 monooxygenase ausR then converts dehydroaustin is into 7-dehydrodehydroaustin. The hydroxylation catalyzed by ausR permits the O-acetyltransferase ausQ to add an additional acetyl group to the molecule, leading to the formation of acetoxydehydroaustin. The short chain dehydrogenase ausT catalyzes the reduction of the double bond present between carbon atoms 1 and 2 to convert 7-dehydrodehydroaustin into 1,2-dihydro-7-hydroxydehydroaustin. AusQ catalyzes not only an acetylation reaction but also the addition of the PKS ausV diketide product to 1,2-dihydro-7-hydroxydehydroaustin, forming precalidodehydroaustin. Finally, the iron/alpha-ketoglutarate-dependent dioxygenase converts precalidodehydroaustin into calidodehydroaustin. This Aspergillus calidoustus protein is Aldo-keto reductase ausK.